The sequence spans 73 residues: UPF0235 protein LBL_1291 (73 aa).

This sequence belongs to the UPF0235 family.

The chain is UPF0235 protein LBL_1291 from Leptospira borgpetersenii serovar Hardjo-bovis (strain L550).